Reading from the N-terminus, the 91-residue chain is MEVVPVQIAAGTTSTFILPVIIAFVVCFVSIILIVWISEFIVYTSVLVLTLLLYLLLWLLLTTPLQFFLLTLLVCYCPALYIHYYIVTTQQ.

Belongs to the papillomaviridae E5A protein family.

This is Probable protein E5A from Human papillomavirus type 6b.